The chain runs to 189 residues: Elongation factor P (189 aa).

The residue at position 34 (lysine 34) is an N6-(3,6-diaminohexanoyl)-5-hydroxylysine.

The protein belongs to the elongation factor P family. In terms of processing, may be beta-lysylated on the epsilon-amino group of Lys-34 by the combined action of EpmA and EpmB, and then hydroxylated on the C5 position of the same residue by EpmC (if this protein is present). Lysylation is critical for the stimulatory effect of EF-P on peptide-bond formation. The lysylation moiety may extend toward the peptidyltransferase center and stabilize the terminal 3-CCA end of the tRNA. Hydroxylation of the C5 position on Lys-34 may allow additional potential stabilizing hydrogen-bond interactions with the P-tRNA.

The protein resides in the cytoplasm. It participates in protein biosynthesis; polypeptide chain elongation. Its function is as follows. Involved in peptide bond synthesis. Alleviates ribosome stalling that occurs when 3 or more consecutive Pro residues or the sequence PPG is present in a protein, possibly by augmenting the peptidyl transferase activity of the ribosome. Modification of Lys-34 is required for alleviation. The protein is Elongation factor P of Legionella pneumophila (strain Paris).